Consider the following 390-residue polypeptide: Mannitol-1-phosphate 5-dehydrogenase (390 aa).

NAD(+) is bound at residue Ala7 to Gly18. Lys216 is a catalytic residue.

This sequence belongs to the mannitol dehydrogenase family. Monomer.

The enzyme catalyses D-mannitol 1-phosphate + NAD(+) = beta-D-fructose 6-phosphate + NADH + H(+). Functionally, catalyzes the NAD(H)-dependent interconversion of D-fructose 6-phosphate and D-mannitol 1-phosphate in the mannitol metabolic pathway. Has a strong preference for NADH over NADPH. The chain is Mannitol-1-phosphate 5-dehydrogenase from Alternaria alternata (Alternaria rot fungus).